We begin with the raw amino-acid sequence, 226 residues long: Ribose-5-phosphate isomerase A (226 aa).

Substrate contacts are provided by residues T26–T29, D82–D85, and K95–G98. E104 (proton acceptor) is an active-site residue. K122 serves as a coordination point for substrate.

This sequence belongs to the ribose 5-phosphate isomerase family. As to quaternary structure, homodimer.

The enzyme catalyses aldehydo-D-ribose 5-phosphate = D-ribulose 5-phosphate. The protein operates within carbohydrate degradation; pentose phosphate pathway; D-ribose 5-phosphate from D-ribulose 5-phosphate (non-oxidative stage): step 1/1. Catalyzes the reversible conversion of ribose-5-phosphate to ribulose 5-phosphate. The protein is Ribose-5-phosphate isomerase A of Streptococcus uberis (strain ATCC BAA-854 / 0140J).